The following is a 391-amino-acid chain: MLAHKSLLSFTTQWATLMPSPSTFLASRPRGPAKISAVAAPVRPALKHQNKIHTMPPEKMEIFKSLDGWAKDQILPLLKPVDQCWQPASFLPDPALPFSEFTDQVRELRERTASLPDEYFVVLVGDMITEDALPTYQTMINTLDGVRDETGASESAWASWTRAWTAEENRHGDLLRTYLYLSGRVDMLMVERTVQHLIGSGMDPGTENNPYLGFVYTSFQERATFVSHGNTARLAKSAGDPVLARICGTIAADEKRHENAYVRIVEKLLEIDPNGAVSAVADMMRKKITMPAHLMTDGRDPMLFEHFSAVAQRLEVYTADDYADILEFLVGRWRLEKLEGLTGEGQRAQEFVCGLAQRIRRLQERADERAKKLKKTHEVCFSWIFDKQISV.

A chloroplast-targeting transit peptide spans 1-38 (MLAHKSLLSFTTQWATLMPSPSTFLASRPRGPAKISAV). Residues glutamate 130, glutamate 168, histidine 171, glutamate 221, glutamate 254, and histidine 257 each coordinate Fe cation.

The protein belongs to the fatty acid desaturase type 2 family. In terms of assembly, homodimer. Requires Fe(2+) as cofactor.

Its subcellular location is the plastid. It is found in the chloroplast. It carries out the reaction octadecanoyl-[ACP] + 2 reduced [2Fe-2S]-[ferredoxin] + O2 + 2 H(+) = (9Z)-octadecenoyl-[ACP] + 2 oxidized [2Fe-2S]-[ferredoxin] + 2 H2O. It functions in the pathway lipid metabolism; fatty acid metabolism. Functionally, converts stearoyl-ACP to oleoyl-ACP by introduction of a cis double bond between carbons 9 and 10 of the acyl chain. This is Stearoyl-[acyl-carrier-protein] 9-desaturase 6, chloroplastic (S-ACP-DES6) from Arabidopsis thaliana (Mouse-ear cress).